We begin with the raw amino-acid sequence, 395 residues long: NAD(P)H-quinone oxidoreductase subunit H (395 aa).

Belongs to the complex I 49 kDa subunit family. NDH-1 can be composed of about 15 different subunits; different subcomplexes with different compositions have been identified which probably have different functions.

It is found in the cellular thylakoid membrane. The catalysed reaction is a plastoquinone + NADH + (n+1) H(+)(in) = a plastoquinol + NAD(+) + n H(+)(out). It catalyses the reaction a plastoquinone + NADPH + (n+1) H(+)(in) = a plastoquinol + NADP(+) + n H(+)(out). Its function is as follows. NDH-1 shuttles electrons from an unknown electron donor, via FMN and iron-sulfur (Fe-S) centers, to quinones in the respiratory and/or the photosynthetic chain. The immediate electron acceptor for the enzyme in this species is believed to be plastoquinone. Couples the redox reaction to proton translocation, and thus conserves the redox energy in a proton gradient. Cyanobacterial NDH-1 also plays a role in inorganic carbon-concentration. In Prochlorococcus marinus (strain MIT 9515), this protein is NAD(P)H-quinone oxidoreductase subunit H.